Here is a 253-residue protein sequence, read N- to C-terminus: Ubiquinone biosynthesis O-methyltransferase (253 aa).

S-adenosyl-L-methionine contacts are provided by Arg-47, Gly-78, Asp-99, and Met-141.

It belongs to the methyltransferase superfamily. UbiG/COQ3 family.

The enzyme catalyses a 3-demethylubiquinol + S-adenosyl-L-methionine = a ubiquinol + S-adenosyl-L-homocysteine + H(+). It catalyses the reaction a 3-(all-trans-polyprenyl)benzene-1,2-diol + S-adenosyl-L-methionine = a 2-methoxy-6-(all-trans-polyprenyl)phenol + S-adenosyl-L-homocysteine + H(+). It functions in the pathway cofactor biosynthesis; ubiquinone biosynthesis. In terms of biological role, O-methyltransferase that catalyzes the 2 O-methylation steps in the ubiquinone biosynthetic pathway. This chain is Ubiquinone biosynthesis O-methyltransferase, found in Bradyrhizobium sp. (strain ORS 278).